Consider the following 405-residue polypeptide: Elongation factor Tu (405 aa).

One can recognise a tr-type G domain in the interval 10–215 (KPHVNVGTIG…AVDSYIPTPE (206 aa)). Positions 19-26 (GHVDHGKT) are G1. Residue 19 to 26 (GHVDHGKT) coordinates GTP. Residue Thr-26 coordinates Mg(2+). The interval 61–65 (GITIN) is G2. The segment at 82-85 (DCPG) is G3. GTP-binding positions include 82-86 (DCPGH) and 137-140 (NKVD). The interval 137 to 140 (NKVD) is G4. The segment at 175–177 (SAL) is G5.

The protein belongs to the TRAFAC class translation factor GTPase superfamily. Classic translation factor GTPase family. EF-Tu/EF-1A subfamily. In terms of assembly, monomer.

It localises to the cytoplasm. It carries out the reaction GTP + H2O = GDP + phosphate + H(+). Its function is as follows. GTP hydrolase that promotes the GTP-dependent binding of aminoacyl-tRNA to the A-site of ribosomes during protein biosynthesis. In Deinonema sp, this protein is Elongation factor Tu.